The chain runs to 351 residues: MQTYGNPDVTYGWWAGNSGVTNRSGKFIAAHAAHTGLIAFWAGAFTLFELARFDPSVPMGHQPLIALPHLATLGIGFDEAGTFVGGTTVTAIAIVHLVLSMVYGAGGLLHSLTFPGDMQDSEVLQARKFKLEWDNPDNQTFILGHHLIFLGVANIQFVEWARIHGIWDAAAGSIRQVEYNLNLSSIWNHQFDFLTINNLEDVMGGHAFLAFFMITGGAFHIATKQVGEYTKFKGSGLLSAEAILSWSLAGIGWMAIVAAFWCATNTTVYPVDFFGEVLDLKFGIAPYWVDTVDLPNGAHTSRAWLTNVHYFLGFFYIQGHLWHALRAMGFDFKRVSSAVSNIGTASVTLND.

6 consecutive transmembrane segments (helical) span residues 27-47 (FIAAHAAHTGLIAFWAGAFTL), 64-84 (LIALPHLATLGIGFDEAGTFV), 89-109 (VTAIAIVHLVLSMVYGAGGLL), 202-222 (VMGGHAFLAFFMITGGAFHIA), 242-262 (AILSWSLAGIGWMAIVAAFWC), and 305-325 (LTNVHYFLGFFYIQGHLWHAL).

The protein belongs to the PsbB/PsbC family. IsiA/Pcb subfamily. As to quaternary structure, the antenna complex consists of divinyl chlorophylls (a and b) and divinyl chlorophyll a/b binding proteins and binds more divinyl chlorophyll b than does the antenna complex from high-light-adapted Prochlorococcus. It depends on divinyl chlorophyll a as a cofactor. Divinyl chlorophyll b serves as cofactor.

It localises to the cellular thylakoid membrane. In terms of biological role, the antenna complex functions as a light receptor, it captures and delivers excitation energy to photosystems II and I. The Prochlorales pcb genes are not related to higher plant LHCs. This is Divinyl chlorophyll a/b light-harvesting protein PcbA (pcbA) from Prochlorococcus marinus (strain SARG / CCMP1375 / SS120).